The chain runs to 169 residues: Endoribonuclease YbeY (169 aa).

The Zn(2+) site is built by His-135, His-139, and His-145.

The protein belongs to the endoribonuclease YbeY family. Zn(2+) is required as a cofactor.

The protein localises to the cytoplasm. Single strand-specific metallo-endoribonuclease involved in late-stage 70S ribosome quality control and in maturation of the 3' terminus of the 16S rRNA. The sequence is that of Endoribonuclease YbeY from Lachnospira eligens (strain ATCC 27750 / DSM 3376 / VPI C15-48 / C15-B4) (Eubacterium eligens).